The following is a 273-amino-acid chain: Dermonecrotic toxin LafSicTox-betaIE1 (273 aa).

The active site involves H5. E25 and D27 together coordinate Mg(2+). The active-site Nucleophile is the H41. 2 cysteine pairs are disulfide-bonded: C45-C51 and C47-C189. A Mg(2+)-binding site is contributed by D85. The N-linked (GlcNAc...) asparagine glycan is linked to N250.

Belongs to the arthropod phospholipase D family. Class II subfamily. Requires Mg(2+) as cofactor. Expressed by the venom gland.

Its subcellular location is the secreted. It carries out the reaction an N-(acyl)-sphingosylphosphocholine = an N-(acyl)-sphingosyl-1,3-cyclic phosphate + choline. It catalyses the reaction an N-(acyl)-sphingosylphosphoethanolamine = an N-(acyl)-sphingosyl-1,3-cyclic phosphate + ethanolamine. The enzyme catalyses a 1-acyl-sn-glycero-3-phosphocholine = a 1-acyl-sn-glycero-2,3-cyclic phosphate + choline. The catalysed reaction is a 1-acyl-sn-glycero-3-phosphoethanolamine = a 1-acyl-sn-glycero-2,3-cyclic phosphate + ethanolamine. Its function is as follows. Dermonecrotic toxins cleave the phosphodiester linkage between the phosphate and headgroup of certain phospholipids (sphingolipid and lysolipid substrates), forming an alcohol (often choline) and a cyclic phosphate. This toxin acts on sphingomyelin (SM). It may also act on ceramide phosphoethanolamine (CPE), lysophosphatidylcholine (LPC) and lysophosphatidylethanolamine (LPE), but not on lysophosphatidylserine (LPS), and lysophosphatidylglycerol (LPG). It acts by transphosphatidylation, releasing exclusively cyclic phosphate products as second products. Induces dermonecrosis, hemolysis, increased vascular permeability, edema, inflammatory response, and platelet aggregation. The chain is Dermonecrotic toxin LafSicTox-betaIE1 from Loxosceles aff. spinulosa (strain GJB-2008) (Recluse spider).